Here is a 210-residue protein sequence, read N- to C-terminus: Ribosomal RNA large subunit methyltransferase E (210 aa).

The S-adenosyl-L-methionine site is built by glycine 60, tryptophan 62, aspartate 85, aspartate 101, and aspartate 126. Lysine 166 (proton acceptor) is an active-site residue. Positions 191 to 200 (KPKASRDKSS) are enriched in basic and acidic residues. Residues 191-210 (KPKASRDKSSETFLVARDLK) are disordered.

It belongs to the class I-like SAM-binding methyltransferase superfamily. RNA methyltransferase RlmE family.

The protein resides in the cytoplasm. The enzyme catalyses uridine(2552) in 23S rRNA + S-adenosyl-L-methionine = 2'-O-methyluridine(2552) in 23S rRNA + S-adenosyl-L-homocysteine + H(+). In terms of biological role, specifically methylates the uridine in position 2552 of 23S rRNA at the 2'-O position of the ribose in the fully assembled 50S ribosomal subunit. This is Ribosomal RNA large subunit methyltransferase E from Bordetella bronchiseptica (strain ATCC BAA-588 / NCTC 13252 / RB50) (Alcaligenes bronchisepticus).